The following is a 131-amino-acid chain: Snaclec bitiscetin subunit alpha (131 aa).

Intrachain disulfides connect cysteine 4–cysteine 15, cysteine 32–cysteine 125, and cysteine 100–cysteine 117. The C-type lectin domain occupies 11–126; that stretch reads YKGHCYKVFK…CGEKNPFICK (116 aa).

The protein belongs to the snaclec family. In terms of assembly, heterodimer of subunits alpha and beta; disulfide-linked. As to expression, expressed by the venom gland.

Its subcellular location is the secreted. In terms of biological role, snaclec that binds to von Willebrand factor (VWF) and induces its interaction with GPIbalpha (GP1BA) (via the vWF A1 domain), resulting in platelet aggregation. The protein is Snaclec bitiscetin subunit alpha of Bitis arietans (African puff adder).